A 165-amino-acid chain; its full sequence is Nucleotide-binding protein PMM0481 (165 aa).

It belongs to the YajQ family.

Functionally, nucleotide-binding protein. This chain is Nucleotide-binding protein PMM0481, found in Prochlorococcus marinus subsp. pastoris (strain CCMP1986 / NIES-2087 / MED4).